Reading from the N-terminus, the 148-residue chain is Large-conductance mechanosensitive channel (148 aa).

2 helical membrane passes run 9-29 (AFAV…GAAF) and 79-99 (IQTV…VKAI).

It belongs to the MscL family. Homopentamer.

The protein resides in the cell inner membrane. Its function is as follows. Channel that opens in response to stretch forces in the membrane lipid bilayer. May participate in the regulation of osmotic pressure changes within the cell. This is Large-conductance mechanosensitive channel from Pseudomonas syringae pv. syringae (strain B728a).